We begin with the raw amino-acid sequence, 65 residues long: UPF0434 protein IL1511 (65 aa).

It belongs to the UPF0434 family.

The polypeptide is UPF0434 protein IL1511 (Idiomarina loihiensis (strain ATCC BAA-735 / DSM 15497 / L2-TR)).